Here is a 376-residue protein sequence, read N- to C-terminus: Chaperone protein DnaJ (376 aa).

Residues 5–70 enclose the J domain; it reads DYYEVLGAAK…QKRAAYDQFG (66 aa). Residues 134-212 form a CR-type zinc finger; sequence GCDEKIRIPT…CGGQGRVQNT (79 aa). Positions 147, 150, 164, 167, 186, 189, 200, and 203 each coordinate Zn(2+). CXXCXGXG motif repeat units lie at residues 147–154, 164–171, 186–193, and 200–207; these read CDVCHGSG, CTTCGGVG, CPTCKGEG, and CGNCGGQG.

This sequence belongs to the DnaJ family. In terms of assembly, homodimer. Requires Zn(2+) as cofactor.

It localises to the cytoplasm. In terms of biological role, participates actively in the response to hyperosmotic and heat shock by preventing the aggregation of stress-denatured proteins and by disaggregating proteins, also in an autonomous, DnaK-independent fashion. Unfolded proteins bind initially to DnaJ; upon interaction with the DnaJ-bound protein, DnaK hydrolyzes its bound ATP, resulting in the formation of a stable complex. GrpE releases ADP from DnaK; ATP binding to DnaK triggers the release of the substrate protein, thus completing the reaction cycle. Several rounds of ATP-dependent interactions between DnaJ, DnaK and GrpE are required for fully efficient folding. Also involved, together with DnaK and GrpE, in the DNA replication of plasmids through activation of initiation proteins. The polypeptide is Chaperone protein DnaJ (Alcanivorax borkumensis (strain ATCC 700651 / DSM 11573 / NCIMB 13689 / SK2)).